We begin with the raw amino-acid sequence, 318 residues long: Aspartate carbamoyltransferase catalytic subunit (318 aa).

Arg-62 and Thr-63 together coordinate carbamoyl phosphate. Lys-90 provides a ligand contact to L-aspartate. Residues Arg-112, His-140, and Gln-143 each contribute to the carbamoyl phosphate site. Positions 173 and 227 each coordinate L-aspartate. Carbamoyl phosphate is bound by residues Gly-268 and Pro-269.

Belongs to the aspartate/ornithine carbamoyltransferase superfamily. ATCase family. As to quaternary structure, heterododecamer (2C3:3R2) of six catalytic PyrB chains organized as two trimers (C3), and six regulatory PyrI chains organized as three dimers (R2).

It carries out the reaction carbamoyl phosphate + L-aspartate = N-carbamoyl-L-aspartate + phosphate + H(+). The protein operates within pyrimidine metabolism; UMP biosynthesis via de novo pathway; (S)-dihydroorotate from bicarbonate: step 2/3. Catalyzes the condensation of carbamoyl phosphate and aspartate to form carbamoyl aspartate and inorganic phosphate, the committed step in the de novo pyrimidine nucleotide biosynthesis pathway. The polypeptide is Aspartate carbamoyltransferase catalytic subunit (Desulfotalea psychrophila (strain LSv54 / DSM 12343)).